Here is a 233-residue protein sequence, read N- to C-terminus: Large ribosomal subunit protein eL6x (233 aa).

Residues 48-72 (HDAKSKVDAPVEKPPKFYPAEDVKK) show a composition bias toward basic and acidic residues. Positions 48–80 (HDAKSKVDAPVEKPPKFYPAEDVKKPLPNRRTA) are disordered.

Belongs to the eukaryotic ribosomal protein eL6 family.

The chain is Large ribosomal subunit protein eL6x (RPL6C) from Arabidopsis thaliana (Mouse-ear cress).